A 200-amino-acid polypeptide reads, in one-letter code: MAKKTYDLLFKLLLIGDSGVGKTCVLFRFSDDAFNTTFISTIGIDFKIKTVELHGKKIKLQIWDTAGQERFHTITTSYYRGAMGIMLVYDITNAKSFENISKWLRNIDEHANEDVERMLLGNKCDMEDKRVVLKSKGEQIAREHAIRFFETSAKANINIEKAFLTLAEDILQKTPVKEPDRENVDISTTGGGTGLKKCCS.

GTP contacts are provided by S18, G19, V20, G21, K22, T23, C24, N35, T36, S40, and T41. A Mg(2+)-binding site is contributed by T23. 2 short sequence motifs (switch) span residues 32–46 and 64–81; these read DAFNTTFISTIGIDF and DTAGQERFHTITTSYYRG. Mg(2+)-binding residues include T41 and D64. The GTP site is built by G67, N122, K123, D125, M126, S152, A153, and K154. The tract at residues 181 to 200 is disordered; it reads RENVDISTTGGGTGLKKCCS. Residues C198 and C199 are each lipidated (S-geranylgeranyl cysteine).

Belongs to the small GTPase superfamily. Rab family. Mg(2+) is required as a cofactor.

Its subcellular location is the cytoplasmic vesicle membrane. The protein localises to the golgi apparatus. The protein resides in the trans-Golgi network membrane. It localises to the endosome membrane. It is found in the recycling endosome membrane. Its subcellular location is the cytoplasmic vesicle. The protein localises to the phagosome membrane. The protein resides in the cell projection. It localises to the cilium. It is found in the endoplasmic reticulum membrane. The enzyme catalyses GTP + H2O = GDP + phosphate + H(+). With respect to regulation, regulated by guanine nucleotide exchange factors (GEFs) which promote the exchange of bound GDP for free GTP. Regulated by GTPase activating proteins (GAPs) which increase the GTP hydrolysis activity. Inhibited by GDP dissociation inhibitors (GDIs) which prevent Rab-GDP dissociation. Its function is as follows. The small GTPases Rab are key regulators of intracellular membrane trafficking, from the formation of transport vesicles to their fusion with membranes. Rabs cycle between an inactive GDP-bound form and an active GTP-bound form that is able to recruit to membranes different set of downstream effectors directly responsible for vesicle formation, movement, tethering and fusion. That Rab is mainly involved in the biosynthetic transport of proteins from the Golgi to the plasma membrane. Also plays a specific role in asymmetric protein transport to the plasma membrane within the polarized neuron and epithelial cells. In neurons, it is involved in axonogenesis through regulation of vesicular membrane trafficking toward the axonal plasma membrane while in epithelial cells, it regulates transport from the Golgi to the basolateral membrane. Moreover, may play a role in the basolateral recycling pathway and in phagosome maturation. Finally, may play a role in endoplasmic reticulum dynamics and morphology controlling tubulation along microtubules and tubules fusion. May participate in the export of neosynthesized proteins through a Rab-dependent endosomal export route. The polypeptide is Ras-related protein Rab-10 (Diplobatis ommata (Ocellated electric ray)).